The primary structure comprises 200 residues: Pyridoxal 5'-phosphate synthase subunit PdxT (200 aa).

52 to 54 provides a ligand contact to L-glutamine; sequence GES. Catalysis depends on Cys84, which acts as the Nucleophile. L-glutamine is bound by residues Arg116 and 145-146; that span reads IR. Catalysis depends on charge relay system residues His181 and Glu183.

The protein belongs to the glutaminase PdxT/SNO family. As to quaternary structure, in the presence of PdxS, forms a dodecamer of heterodimers. Only shows activity in the heterodimer.

It carries out the reaction aldehydo-D-ribose 5-phosphate + D-glyceraldehyde 3-phosphate + L-glutamine = pyridoxal 5'-phosphate + L-glutamate + phosphate + 3 H2O + H(+). The catalysed reaction is L-glutamine + H2O = L-glutamate + NH4(+). Its pathway is cofactor biosynthesis; pyridoxal 5'-phosphate biosynthesis. Functionally, catalyzes the hydrolysis of glutamine to glutamate and ammonia as part of the biosynthesis of pyridoxal 5'-phosphate. The resulting ammonia molecule is channeled to the active site of PdxS. The chain is Pyridoxal 5'-phosphate synthase subunit PdxT from Saccharolobus islandicus (strain Y.N.15.51 / Yellowstone #2) (Sulfolobus islandicus).